We begin with the raw amino-acid sequence, 761 residues long: Neutral ceramidase (761 aa).

Over 1-11 (MAKRTFSSLEA) the chain is Cytoplasmic. Residues 12–32 (FLIFLLVMMTAITVALLTLLF) form a helical; Signal-anchor for type II membrane protein membrane-spanning segment. Residues 33-761 (VTSGTIENHK…ISSPFEIVTT (729 aa)) are Lumenal-facing. The interval 43–76 (DSGNHWVSTTQGPTTTQSSPTTQTPTTQTPDLPP) is disordered. Positions 50–76 (STTQGPTTTQSSPTTQTPTTQTPDLPP) are enriched in low complexity. Thr-51, Thr-52, Thr-56, Thr-57, and Thr-58 each carry an O-linked (GalNAc...) threonine glycan. Residues Ser-60 and Ser-61 are each glycosylated (O-linked (GalNAc...) serine). Thr-63, Thr-64, Thr-66, Thr-68, Thr-69, and Thr-71 each carry an O-linked (GalNAc...) threonine glycan. Residue Leu-115 coordinates Ca(2+). His-175 is a Zn(2+) binding site. Asn-198 is a glycosylation site (N-linked (GlcNAc...) asparagine). Residue His-284 participates in Zn(2+) binding. Ser-335 acts as the Nucleophile in catalysis. Cystine bridges form between Cys-343-Cys-357 and Cys-350-Cys-365. Residues Asn-412 and Asn-449 are each glycosylated (N-linked (GlcNAc...) asparagine). An intrachain disulfide couples Cys-429 to Cys-479. Residues Glu-521 and Tyr-560 each contribute to the Zn(2+) site. Ca(2+) contacts are provided by Asp-693, Ser-695, and Thr-698. Residues 751–761 (GISSPFEIVTT) form a required for correct folding and localization region.

The protein belongs to the neutral ceramidase family. Zn(2+) is required as a cofactor. Post-translationally, proteolytic cleavage of the N-terminus removes the signal-anchor and produces a soluble form of the protein. In terms of processing, N-glycosylated. Required for enzyme activity. O-glycosylated. Required to retain it as a type II membrane protein at the cell surface. Post-translationally, phosphorylated. May prevent ubiquitination and subsequent degradation. In terms of processing, ubiquitinated, leading to its degradation by the proteasome. Ubiquitination is triggered by nitric oxide. In terms of tissue distribution, highly expressed in brain, kidney and heart. Expressed at lower level in other tissues such as liver. Expressed in intestine, kidney and liver (at protein level). Localizes in the epithelia of the jejunum and ileum.

It localises to the cell membrane. The protein resides in the membrane raft. Its subcellular location is the membrane. The protein localises to the caveola. It is found in the golgi apparatus membrane. It localises to the mitochondrion. The protein resides in the secreted. Its subcellular location is the extracellular exosome. It carries out the reaction an N-acylsphing-4-enine + H2O = sphing-4-enine + a fatty acid. It catalyses the reaction N-hexadecanoylsphing-4-enine + H2O = sphing-4-enine + hexadecanoate. The catalysed reaction is N-tetradecanoylsphing-4-enine + H2O = tetradecanoate + sphing-4-enine. The enzyme catalyses N-(9Z-octadecenoyl)-sphing-4-enine + H2O = sphing-4-enine + (9Z)-octadecenoate. It carries out the reaction N-(15Z-tetracosenoyl)-sphing-4-enine + H2O = (15Z)-tetracosenoate + sphing-4-enine. It catalyses the reaction N-octanoylsphing-4-enine + H2O = octanoate + sphing-4-enine. The catalysed reaction is N-dodecanoylsphing-4-enine + H2O = dodecanoate + sphing-4-enine. The enzyme catalyses N-(hexanoyl)sphing-4-enine + H2O = hexanoate + sphing-4-enine. It carries out the reaction N-octadecanoylsphing-4-enine + H2O = sphing-4-enine + octadecanoate. It catalyses the reaction sphinganine + hexadecanoate = N-hexadecanoylsphinganine + H2O. The catalysed reaction is N-(octadecanoyl)-sphinganine + H2O = sphinganine + octadecanoate. The protein operates within lipid metabolism; sphingolipid metabolism. Its activity is regulated as follows. The reverse reaction is inhibited by Zn(2+) and Cu(2+). Inhibited by cardiolipin and phosphatidic acid. Functionally, plasma membrane ceramidase that hydrolyzes sphingolipid ceramides into sphingosine and free fatty acids at neutral pH. Ceramides, sphingosine, and its phosphorylated form sphingosine-1-phosphate are bioactive lipids that mediate cellular signaling pathways regulating several biological processes including cell proliferation, apoptosis and differentiation. Also catalyzes the reverse reaction allowing the synthesis of ceramides from fatty acids and sphingosine. Together with sphingomyelinase, participates in the production of sphingosine and sphingosine-1-phosphate from the degradation of sphingomyelin, a sphingolipid enriched in the plasma membrane of cells. Also participates in the hydrolysis of ceramides from the extracellular milieu allowing the production of sphingosine-1-phosphate inside and outside cells. This is the case for instance with the digestion of dietary sphingolipids in the intestinal tract. In Rattus norvegicus (Rat), this protein is Neutral ceramidase (Asah2).